A 2570-amino-acid polypeptide reads, in one-letter code: Stabilin-1 (2570 aa).

Positions 1-25 are cleaved as a signal peptide; that stretch reads MAGPRGLLPLCLLAFCLAGFSFVRG. The Extracellular portion of the chain corresponds to 26–2478; it reads QVLFKGCDVK…LAPEAPPVAA (2453 aa). 4 consecutive EGF-like domains span residues 110–148, 156–193, 195–229, and 232–271; these read HECP…SACQ, FGPD…PHCD, ELPV…QGSE, and APNP…MVCL. 11 disulfide bridges follow: C112–C126, C120–C136, C138–C147, C160–C171, C164–C181, C183–C192, C199–C210, C204–C217, C236–C247, C241–C257, and C259–C270. N133 carries an N-linked (GlcNAc...) asparagine glycan. N-linked (GlcNAc...) asparagine glycans are attached at residues N286, N312, N413, N606, N673, N712, and N745. FAS1 domains are found at residues 356 to 494 and 506 to 641; these read YGHL…TGLR and KRTI…DGIL. An EGF-like 5 domain is found at 728–768; sequence DCTQCPGGFSNPCYGKGNCSDGIQGNGACLCFPDYKGIACH. 3 disulfide bridges follow: C732-C746, C740-C756, and C758-C767. A glycan (N-linked (GlcNAc...) asparagine) is linked at N816. EGF-like domains follow at residues 818 to 858, 861 to 903, 904 to 946, and 947 to 986; these read SMGD…DGFS, PSNP…RVCV, AIDE…YQCS, and PIDP…DGFS. Cystine bridges form between C822-C837, C831-C846, C865-C879, C873-C889, C891-C902, C908-C922, C916-C932, C934-C945, C951-C964, and C958-C974. FAS1 domains lie at 988-1118 and 1128-1253; these read YGDI…SQVL and GQGL…SGVL. Residues N1087, N1096, N1170, N1178, N1222, and N1274 are each glycosylated (N-linked (GlcNAc...) asparagine). A Laminin EGF-like 1 domain is found at 1327–1392; sequence TLCEPCPGGL…CDCAHGLCQE (66 aa). Disulfide bonds link C1332–C1346, C1340–C1356, and C1358–C1367. N1378 carries an N-linked (GlcNAc...) asparagine glycan. 15 cysteine pairs are disulfide-bonded: C1379–C1390, C1383–C1400, C1402–C1411, C1420–C1430, C1424–C1440, C1442–C1453, C1459–C1472, C1466–C1482, C1484–C1495, C1501–C1514, C1508–C1524, C1526–C1538, C1544–C1557, C1551–C1567, and C1569–C1581. 4 EGF-like domains span residues 1416–1454, 1455–1496, 1497–1539, and 1540–1582; these read TSPQ…IFCS, EVDP…ELCQ, EINS…RTCE, and LLDP…LTCR. The N-linked (GlcNAc...) asparagine glycan is linked to N1471. FAS1 domains lie at 1582-1708 and 1724-1864; these read RARV…DRVL and PRRN…DQLL. 2 N-linked (GlcNAc...) asparagine glycosylation sites follow: N1626 and N1727. The Laminin EGF-like 2 domain occupies 1966–2031; sequence SECQACPGGP…RCTVHGRCDE (66 aa). 15 disulfide bridges follow: C1971–C1985, C1979–C1995, C1997–C2006, C2018–C2029, C2023–C2039, C2041–C2050, C2060–C2070, C2064–C2076, C2078–C2089, C2095–C2108, C2102–C2117, C2119–C2130, C2136–C2150, C2144–C2160, and C2162–C2173. EGF-like domains follow at residues 2056–2090, 2091–2131, and 2132–2174; these read LQPV…RVCT, VADL…WSCR, and ARNP…LQCL. Residue N2107 is glycosylated (N-linked (GlcNAc...) asparagine). A Link domain is found at 2206 to 2301; sequence RAGVFHLQAT…SERWDAYCFR (96 aa). N-linked (GlcNAc...) asparagine glycans are attached at residues N2222, N2261, N2290, N2334, N2347, N2379, N2393, N2400, and N2424. 2 disulfides stabilise this stretch: C2230-C2299 and C2254-C2275. The FAS1 7 domain occupies 2322 to 2459; sequence NGKLLDVLAA…GIIHALASPL (138 aa). Residues 2479 to 2499 form a helical membrane-spanning segment; sequence GVGAVLAAGALLGLVAGALYL. Over 2500-2570 the chain is Cytoplasmic; sequence RARGKPMGFG…PDTQRILTVK (71 aa).

As to quaternary structure, interacts with CHID1. In terms of tissue distribution, high levels found in spleen, lymph node, liver and placenta. Also expressed in endothelial cells.

Its subcellular location is the membrane. In terms of biological role, acts as a scavenger receptor for acetylated low density lipoprotein. Binds to both Gram-positive and Gram-negative bacteria and may play a role in defense against bacterial infection. When inhibited in endothelial tube formation assays, there is a marked decrease in cell-cell interactions, suggesting a role in angiogenesis. Involved in the delivery of newly synthesized CHID1/SI-CLP from the biosynthetic compartment to the endosomal/lysosomal system. This chain is Stabilin-1 (STAB1), found in Homo sapiens (Human).